The chain runs to 69 residues: Antimicrobial peptide Meucin-18 (69 aa).

Positions 1 to 16 are cleaved as a signal peptide; it reads MVIFLAYFLVVNESEA. Positions 38–69 are excised as a propeptide; it reads ERSVMNRDLENLFDPYQRNLEMDRLLKQLRNY.

The protein belongs to the non-disulfide-bridged peptide (NDBP) superfamily. Medium-length antimicrobial peptide (group 3) family. As to expression, expressed by the venom gland.

It localises to the secreted. The protein resides in the target cell membrane. In terms of biological role, amphipathic peptide that exhibits extensive cytolytic activities against both prokaryotic and eukaryotic cells. Acts by fastly disrupting the bacterial membrane. Is more potent against Gram-positive bacteria than against Gram-negative bacteria, and fungi (LC=25.1-8.3 uM). Shows potent activity against penicillin (MIC=3.0 uM) and methicillin (MIC=1.5-3.0 uM) resistant bacteria. Is lethal to the fungus Beauveria sp (LC=1.9 uM), a highly lethal pathogenic fungus to insects and resistant to many AMPs. Shows hemolytic activity against rabbit erythrocytes (37.7% of inhibition at 6.25 uM) and cytolysis against rat dorsal root ganglions. May act by disrupting the integrity of the bacterial cell membrane. Antibiotic activity is not affected by major negatively charged components of the prokaryotic cell wall (e.g. lipopolysaccharides and lipoteichoic acid). In vivo, intravenous injection into mice tail provokes uncomfortable symptoms with a death rate of 12.5%. In vivo, in a mouse model of lethal peritonitis, shows potent antibiotic activity without cytotoxicity, improving the survival rate. The chain is Antimicrobial peptide Meucin-18 from Mesobuthus eupeus (Lesser Asian scorpion).